We begin with the raw amino-acid sequence, 311 residues long: Dihydroorotate dehydrogenase B (NAD(+)), catalytic subunit (311 aa).

FMN contacts are provided by residues Ser24 and 48–49; that span reads KA. Substrate is bound by residues Lys48 and 72 to 76; that span reads NAIGL. Positions 104 and 132 each coordinate FMN. Asn132 lines the substrate pocket. The Nucleophile role is filled by Cys135. FMN-binding residues include Lys170 and Ile196. 197-198 lines the substrate pocket; that stretch reads NT. Residues Gly222, 248–249, and 270–271 each bind FMN; these read GG and GT.

The protein belongs to the dihydroorotate dehydrogenase family. Type 1 subfamily. Heterotetramer of 2 PyrK and 2 PyrD type B subunits. It depends on FMN as a cofactor.

It localises to the cytoplasm. The enzyme catalyses (S)-dihydroorotate + NAD(+) = orotate + NADH + H(+). It participates in pyrimidine metabolism; UMP biosynthesis via de novo pathway; orotate from (S)-dihydroorotate (NAD(+) route): step 1/1. Catalyzes the conversion of dihydroorotate to orotate with NAD(+) as electron acceptor. Cannot use fumarate as an electron acceptor. The chain is Dihydroorotate dehydrogenase B (NAD(+)), catalytic subunit (pyrDB) from Lactococcus lactis subsp. cremoris (strain MG1363).